A 537-amino-acid polypeptide reads, in one-letter code: Zinc finger protein 703 (537 aa).

Disordered stretches follow at residues 1–38, 90–254, and 300–323; these read MNCS…LRQA, SQIG…VAPV, and VGNQ…LTGA. Residues 101–111 are compositionally biased toward polar residues; it reads SKLNSVTSSGL. Positions 149–158 are enriched in low complexity; that stretch reads GSSSGGAADK. Over residues 176 to 185 the composition is skewed to polar residues; sequence SPSSRVSSPG. The segment covering 188 to 203 has biased composition (basic and acidic residues); sequence CDSKNNESQEKKEPEA. Residues 205-220 show a composition bias toward polar residues; it reads KANSETSQVNPTLTRA. Residues 221 to 232 show a composition bias toward low complexity; it reads STSNSSAESSQS. A C2H2-type zinc finger spans residues 409-437; sequence HICNWVSASGPCDKRFSTSEELLAHLRTH.

Belongs to the Elbow/Noc family.

The protein resides in the nucleus. It is found in the cytoplasm. In terms of biological role, transcriptional corepressor which does not bind directly to DNA and may regulate transcription through recruitment of histone deacetylases to gene promoters. Regulates cell adhesion, migration and proliferation. Involved in specification of the lateral neural plate border (NPB). May be required for segmental gene expression during hindbrain development. This is Zinc finger protein 703 (znf703) from Xenopus tropicalis (Western clawed frog).